Here is a 748-residue protein sequence, read N- to C-terminus: 5-methyltetrahydropteroyltriglutamate--homocysteine methyltransferase (748 aa).

Residues 18–21 (REWK) and Lys112 contribute to the 5-methyltetrahydropteroyltri-L-glutamate site. L-homocysteine-binding positions include 420 to 422 (IGS) and Glu473. L-methionine contacts are provided by residues 420 to 422 (IGS) and Glu473. Trp550 contributes to the 5-methyltetrahydropteroyltri-L-glutamate binding site. Asp588 is an L-homocysteine binding site. Asp588 contacts L-methionine. 5-methyltetrahydropteroyltri-L-glutamate is bound at residue Glu594. Zn(2+)-binding residues include His630, Cys632, and Glu654. The Proton donor role is filled by His683. Zn(2+) is bound at residue Cys715.

The protein belongs to the vitamin-B12 independent methionine synthase family. Zn(2+) serves as cofactor.

The enzyme catalyses 5-methyltetrahydropteroyltri-L-glutamate + L-homocysteine = tetrahydropteroyltri-L-glutamate + L-methionine. It functions in the pathway amino-acid biosynthesis; L-methionine biosynthesis via de novo pathway; L-methionine from L-homocysteine (MetE route): step 1/1. In terms of biological role, catalyzes the transfer of a methyl group from 5-methyltetrahydrofolate to homocysteine resulting in methionine formation. The chain is 5-methyltetrahydropteroyltriglutamate--homocysteine methyltransferase from Staphylococcus epidermidis (strain ATCC 12228 / FDA PCI 1200).